A 246-amino-acid polypeptide reads, in one-letter code: Sensory transduction protein LytT (246 aa).

The 117-residue stretch at 4-120 (HIMIAEDERL…RFKIAMNRIR (117 aa)) folds into the Response regulatory domain. The residue at position 55 (Asp-55) is a 4-aspartylphosphate. One can recognise an HTH LytTR-type domain in the interval 136-243 (LVVNLDEKMM…AKGLFDALQG (108 aa)).

In terms of processing, phosphorylated by LytS.

Its subcellular location is the cytoplasm. Its function is as follows. Member of the two-component regulatory system LytS/LytT that probably regulates genes involved in cell wall metabolism. The sequence is that of Sensory transduction protein LytT (lytT) from Oceanobacillus iheyensis (strain DSM 14371 / CIP 107618 / JCM 11309 / KCTC 3954 / HTE831).